Consider the following 333-residue polypeptide: Gramillins biosynthetic cluster protein FGSG_00039 (333 aa).

It functions in the pathway mycotoxin biosynthesis. Functionally, part of the gene cluster that mediates the biosynthesis of gramillins A and B, bicyclic lipopeptides that induce cell death in maize leaves but not in wheat leaves. The nonribosomal peptide synthetase GRA1 incorporates respectively a glutamic adic (Glu), a leucine (Leu), a serine (Ser), a hydroxyglutamine (HOGln), a 2-amino decanoic acid, and 2 cysteins (CysB and CysA). The biosynthesis of 2-amino decanoic acid incorporated in gramillins could be initiated by a fatty acid synthase composed of the alpha and beta subunits FGSG_00036 and FGSG_11656. The cytochrome P450 monooxygenase FGSG_15680 could hydroxylate the fatty acid chain. Subsequent oxidation to the ketone by the oxidoreductase FGSG_00048 and transamination by aminotransferase FGSG_00049 could form 2-amino-decanoic acid. On the other hand, FGSG_15680 could also be responsible for the HO-modified glutamine at the gamma-position. Whether hydroxylation occurs on the fully assembled product or on the Gln residue prior to assembly into the gramillins requires further proof. The thioredoxin FGSG_00043 could also be required for the disulfide-bond formation between CysA and CysB. The specific involvement of the remaining proteins from the cluster is more difficult to discern, but could have broader regulatory (FGSG_00040 and FGSG_11657) or enzymatic functions (FGSG_00044 and FGSG_00045). The final C-domain of GRA1 does not possess the expected sequence of a termination CT domain, often implicated in macrocyclization and release of a cyclopeptidein fungal NRPs; and the thioesterase FGSG_00047 may act in concert with the terminal C-domain of GRA1 to catalyze the formation of the macrocyclic anhydride and release of the products. This chain is Gramillins biosynthetic cluster protein FGSG_00039, found in Gibberella zeae (strain ATCC MYA-4620 / CBS 123657 / FGSC 9075 / NRRL 31084 / PH-1) (Wheat head blight fungus).